A 242-amino-acid chain; its full sequence is Probable transcriptional regulatory protein NMB1648 (242 aa).

The protein belongs to the TACO1 family.

It localises to the cytoplasm. The polypeptide is Probable transcriptional regulatory protein NMB1648 (Neisseria meningitidis serogroup B (strain ATCC BAA-335 / MC58)).